Reading from the N-terminus, the 431-residue chain is Forkhead box protein P3 (431 aa).

A disordered region spans residues 1-68 (MPNPRPGKPS…SSLNPMPPSQ (68 aa)). Over residues 10–25 (SAPSLALGPSPGASPS) the composition is skewed to low complexity. A Phosphoserine; by CDK2 modification is found at Ser-19. The residue at position 31 (Lys-31) is an N6-acetyllysine. The Nuclear export signal signature appears at 68 to 76 (QLQLPTLPL). The short motif at 92–96 (LQALL) is the LXXLL motif element. An essential for transcriptional repressor activity and for interaction with KAT5 and HDAC7 region spans residues 106 to 190 (LSTVDAHART…STLSAMPQSS (85 aa)). The interaction with IKZF4 stretch occupies residues 149–199 (LPPGINVASLEWVSREPALLCTFPNPGAPRKDSTLSAMPQSSYPLLANGVC). The segment at 197–222 (GVCKWPGCEKVFEEPEDFLKHCQADH) adopts a C2H2-type zinc-finger fold. The Nuclear export signal signature appears at 239–248 (VQSLEQQLVL). The interval 239-260 (VQSLEQQLVLEKEKLSAMQAHL) is leucine-zipper. Glycyl lysine isopeptide (Lys-Gly) (interchain with G-Cter in ubiquitin) cross-links involve residues Lys-250 and Lys-252. 2 positions are modified to N6-acetyllysine; alternate: Lys-263 and Lys-268. Residues Lys-263 and Lys-268 each participate in a glycyl lysine isopeptide (Lys-Gly) (interchain with G-Cter in ubiquitin); alternate cross-link. The tract at residues 278 to 336 (GSCCIVAAGSQGSAVPAWSGPREAPDSLFAVRRHLWGSHGNSTFPEFLHNMDYFKFHNM) is interaction with RUNX1. Residues 337–423 (RPPFTYATLI…RKKRSQRPSR (87 aa)) constitute a DNA-binding region (fork-head). Lys-393 is covalently cross-linked (Glycyl lysine isopeptide (Lys-Gly) (interchain with G-Cter in ubiquitin)). The short motif at 414-417 (RKKR) is the Nuclear localization signal element. The residue at position 418 (Ser-418) is a Phosphoserine. A propeptide spanning residues 418-431 (SQRPSRCSNPTPGP) is cleaved from the precursor.

In terms of assembly, homodimer. Dimerization is essential for its transcriptional regulator activity. Interacts with IKZF3. Interacts (via LXXLL motif) with RORA (via AF-2 motif). Interacts with HDAC9 in the absence of T-cell stimulation. Interacts with PPP1CA, PPP1CB, PPP1CG, KAT5, HDAC7, HSPA8, USP7, STUB1, HSPA1A/B, RUNX1, RUNX2, RUNX3, RELA, NFATC2, IKFZ4 and RORC. In terms of processing, phosphorylation at Ser-418 regulates its transcriptional repressor activity and consequently, regulatory T-cells (Treg) suppressive function. Phosphorylation by CDK2 negatively regulates its transcriptional activity and protein stability. Post-translationally, polyubiquitinated, leading to its proteasomal degradation in regulatory T-cells (Treg) which is mediated by STUB1 in a HSPA1A/B-dependent manner. Deubiquitinated by USP7 and USP44 leading to increase in protein stability. Acetylation on lysine residues stabilizes FOXP3 and promotes differentiation of T-cells into induced regulatory T-cells (iTregs) associated with suppressive functions. Acetylation is mediated by a coordinated action of KAT5 and EP300/p300 acetyltransferases: EP300/p300 is required to enhance KAT5 autoacetylation, promoting acetylation of FOXP3 by KAT5. Deacetylated by SIRT1. In terms of processing, undergoes proteolytic cleavage in activated regulatory T-cells (Treg), and can be cleaved at either the N- or C-terminal site, or at both sites.

It is found in the nucleus. It localises to the cytoplasm. Functionally, transcriptional regulator which is crucial for the development and inhibitory function of regulatory T-cells (Treg). Plays an essential role in maintaining homeostasis of the immune system by allowing the acquisition of full suppressive function and stability of the Treg lineage, and by directly modulating the expansion and function of conventional T-cells. Can act either as a transcriptional repressor or a transcriptional activator depending on its interactions with other transcription factors, histone acetylases and deacetylases. The suppressive activity of Treg involves the coordinate activation of many genes, including CTLA4 and TNFRSF18 by FOXP3 along with repression of genes encoding cytokines such as interleukin-2 (IL2) and interferon-gamma (IFNG). Inhibits cytokine production and T-cell effector function by repressing the activity of two key transcription factors, RELA and NFATC2. Mediates transcriptional repression of IL2 via its association with histone acetylase KAT5 and histone deacetylase HDAC7. Can activate the expression of TNFRSF18, IL2RA and CTLA4 and repress the expression of IL2 and IFNG via its association with transcription factor RUNX1. Inhibits the differentiation of IL17 producing helper T-cells (Th17) by antagonizing RORC function, leading to down-regulation of IL17 expression, favoring Treg development. Inhibits the transcriptional activator activity of RORA. Can repress the expression of IL2 and IFNG via its association with transcription factor IKZF4. This chain is Forkhead box protein P3 (FOXP3), found in Macaca fascicularis (Crab-eating macaque).